The chain runs to 952 residues: MDYQLHEGKQISQEFPTDISTTKSSDLKSRKTDSPSIQRTHEFVNFSVFPIVNTNEIMNVDIKHFSPDLKCPTSPNIFLQPLTTTPNTTPNTSTTIDSNTEINPIEIQLQSPLLFQPEHLSPQTLKTTIPTFSIPTYPTPLNTKFQSSPPPPPPPPAATTTTTITTTTTTSAGNSTTKNNNNNNNNNNNNNGKSPKQFQDVLIPVTSSGKDGALYTVLENVPIKRTHRRRSANIDKDSLKCYQCNTSNTPEWRKGPEGPATLCNACGLAYAKKQKLTKNNIKFNQSTNVNNNTNNTITQLNQQINNQGLPNLTSTTTTSNNTAAAVNITTPSKRNNKYNTHRSKVFGEVAPSIVYTNGTLNNVGTPVSDTKKSHTFHEYMTPSNSFFTGKPIKTTKTKPKPKSKSKPGKITHTKHEQPQLNEQVQAIMEKNNLLSSSGGSGGAGSSSSSCGTSLNSSLGSSSGTITNSGGGSSGGGGGNLFSNQQLGFTCINNNVSNNNSNNNINNNDKQIQQQIQQVQQQVHQQVQQQLQQQQQVQQQQQQINQEPFLNQQNHYYQNIFQNVSTGNQNCAINTNGGFPQFESPMDIFPYNNNTTNCTQDSNGFVPNLANFEMQGNVLYNSSGSPSSLGQYVIQNNSFSGPNDQNPYVPSVSLNSNKTTNIKNNNNNKKNSKNKNNKNNKNNNNNTKINNHHINNNKNNVNTNQTIIKENNSQKQHQQQQQQQQQQQEQQKQQQEQQKQQEEQQQNLSINNSNQTNENEILGTTTTTTTSTATIITSQVPMNLSPNSDDNQSSSNYSTLSDSGSSPTDSFSGLSVNTPHPNCDSFSSSINNGSNCGSDIETIESPLQMSTDVLTINNCSSNRTTATNNNINNNNNNNNNNNNNNNKCSIKDDTFNLLTNSNLDSFGIIDCINGSSTNTNSFFMETPLLINDEDLLSSSNLTSSSELLPHSFV.

2 disordered regions span residues 1-36 and 138-197; these read MDYQ…DSPS and PTPL…SPKQ. Positions 10-24 are enriched in polar residues; the sequence is QISQEFPTDISTTKS. A compositionally biased stretch (pro residues) spans 148–157; it reads SPPPPPPPPA. The segment covering 158–196 has biased composition (low complexity); the sequence is ATTTTTITTTTTTSAGNSTTKNNNNNNNNNNNNNGKSPK. The GATA-type zinc-finger motif lies at 241-266; sequence CYQCNTSNTPEWRKGPEGPATLCNAC. Disordered regions lie at residues 380-418, 433-478, 634-699, and 732-816; these read MTPS…HEQP, LLSS…GGGG, QNNS…NKNN, and QQQE…LSVN. The span at 393 to 412 shows a compositional bias: basic residues; the sequence is KTTKTKPKPKSKSKPGKITH. The segment covering 445–467 has biased composition (low complexity); that stretch reads SSSSSCGTSLNSSLGSSSGTITN. A compositionally biased stretch (gly residues) spans 468-478; the sequence is SGGGSSGGGGG. Residues 634–653 show a composition bias toward polar residues; sequence QNNSFSGPNDQNPYVPSVSL. 3 stretches are compositionally biased toward low complexity: residues 654–668, 678–699, and 732–745; these read NSNK…NNNK, NNKN…NKNN, and QQQE…EQQQ. Residues 746 to 762 are compositionally biased toward polar residues; that stretch reads NLSINNSNQTNENEILG. Residues 763-814 show a composition bias toward low complexity; that stretch reads TTTTTTTSTATIITSQVPMNLSPNSDDNQSSSNYSTLSDSGSSPTDSFSGLS.

The polypeptide is GATA zinc finger domain-containing protein 5 (gtaE) (Dictyostelium discoideum (Social amoeba)).